Reading from the N-terminus, the 96-residue chain is Cytoplasmic envelopment protein 3 (96 aa).

Gly2 is lipidated: N-myristoyl glycine; by host. Residues 37-43 (DIESEEE) form an asp/Glu-rich (acidic) region. The residue at position 40 (Ser40) is a Phosphoserine. The segment at 50 to 96 (PDVRVVTRAPGPQYRRPSDPPSRHTRRRDPDVARPPATLTPPLSDSE) is disordered. Basic and acidic residues predominate over residues 65 to 81 (RPSDPPSRHTRRRDPDV).

Belongs to the herpesviridae cytoplasmic envelopment protein 3 family. As to quaternary structure, interacts with cytoplasmic envelopment protein 2; this interaction is essential for the proper localization of each protein to the assembly complex and thus for the production of infectious virus. Interacts with gE (via C-terminus). Interacts with gD (via C-terminus). Interacts with UL56. In terms of processing, myristoylation and palmitoylation (probably on one or more of the nearby cysteines at the N-terminus) enable membrane-binding and Golgi apparatus-specific targeting and are essential for efficient packaging. Post-translationally, phosphorylated. Phosphorylation does not seem to be required for recycling to the host Golgi apparatus. Packaging is selective for underphosphorylated forms.

It localises to the virion tegument. It is found in the virion membrane. The protein localises to the host cell membrane. The protein resides in the host Golgi apparatus membrane. Plays an important role in the cytoplasmic envelopment of tegument proteins and capsids during the assembly and egress processes. Also participates in viral entry at the fusion step probably by regulating the core fusion machinery. The protein is Cytoplasmic envelopment protein 3 of Homo sapiens (Human).